Consider the following 255-residue polypeptide: Alkaline ceramidase (255 aa).

The Lumenal segment spans residues 1-28 (MADGISSFWGPVTSTIECCEMNYAYSSY). The chain crosses the membrane as a helical span at residues 29–49 (IAEFYNTISNVPGILLALIGL). Over 50–60 (VNALRQRFEKR) the chain is Cytoplasmic. Residues 61 to 81 (FSILHISNMILAIGSMLYHAT) form a helical membrane-spanning segment. Histidine 79 is a binding site for Zn(2+). Topologically, residues 82-91 (LQHVQQQSDE) are lumenal. Residues 92 to 112 (TPMVWEILLYMYILYSPDWHY) traverse the membrane as a helical segment. The Cytoplasmic portion of the chain corresponds to 113 to 118 (RSTMPT). A run of 2 helical transmembrane segments spans residues 119-139 (FLFLYGAAFAIVHAYLRFGIG) and 140-160 (FKVHYVILCLLCIPRMYKYYI). The Cytoplasmic segment spans residues 161–169 (HTEDTAAKR). Residues 170–192 (IAKWYVATILVGSICWFCDRVFC) form a helical membrane-spanning segment. Topologically, residues 193–205 (KTISQWPVNPQGH) are lumenal. Residues histidine 205 and histidine 209 each coordinate Zn(2+). Residues 206–226 (ALWHVFMSFNSYCANTFLMFC) traverse the membrane as a helical segment. Topologically, residues 227–255 (RAQQRGWNPKVKYFLGVLPYVKIEKPKTQ) are cytoplasmic.

This sequence belongs to the alkaline ceramidase family. Requires Zn(2+) as cofactor. As to expression, mostly expressed in roots, shoot meristems and pollen, and, to a lower extent, in mature leaves.

It localises to the endoplasmic reticulum membrane. It is found in the golgi apparatus membrane. Hydrolyzes only phytoceramide into phytosphingosine and free fatty acid. Does not have reverse activity. Affects plant morphogenesis. Required for the formation of wax layer that ensure cuticle permeability. Implicated in abscisic acid (ABA)-mediated stomatal closure. Involved in both biotic and abiotic stresses. Promotes salt resistance and defenses responses toward pathogenic bacteria (e.g. P.syringae) and against the fungal toxin fumonisin B1 (FB1). This chain is Alkaline ceramidase, found in Arabidopsis thaliana (Mouse-ear cress).